The sequence spans 64 residues: Antimicrobial peptide 1 (64 aa).

An N-terminal signal peptide occupies residues 1-26; the sequence is MAKVSSSLLKFAIVLILVLSMSAIIS. 3 cysteine pairs are disulfide-bonded: cysteine 29–cysteine 46, cysteine 36–cysteine 50, and cysteine 45–cysteine 61.

This sequence belongs to the AMP family.

It localises to the secreted. In terms of biological role, possesses antifungal and antibacterial activity. In Mesembryanthemum crystallinum (Common ice plant), this protein is Antimicrobial peptide 1.